The chain runs to 437 residues: MSAPRVSFVSLGCPKALVDSERIITRLRAEGYEIARKHDGADLVVVNTCGFLDSARDESLNAIGSALSENGRVIVTGCLGAEPDVIREKHPNVLAITGPQAYESVMAAVHEAAPPSHDPYIDLLPPQGVKLTPRHYAYLKISEGCNNRCTFCIIPALRGDLVSRPAADVLREAEKLAKAGVKELLVISQDTSAYGIDIKYQTSMFGDREVRAKFLDLSEELGKLGIWVRMHYVYPYPHVADVIPLMAEGKILPYLDIPFQHASPQVLKNMRRPAHGEKTLERIRGWRDVCPDLAIRSTFIVGFPGETDEDFEMLLDWLDEAKIDRAGCFKYEPVKGARSNDLGLEQVPQDVKEARWHRFMQRQQKISATQLAKKVGKRLPVLIDEAHGTSAKGRTKYDAPEIDGSVHIQSRRPMRAGDIVTVKIERADAYDLYGSAV.

The 111-residue stretch at 4-114 (PRVSFVSLGC…VMAAVHEAAP (111 aa)) folds into the MTTase N-terminal domain. [4Fe-4S] cluster is bound by residues C13, C49, C78, C145, C149, and C152. A Radical SAM core domain is found at 131–369 (LTPRHYAYLK…MQRQQKISAT (239 aa)). The TRAM domain maps to 372 to 437 (AKKVGKRLPV…DAYDLYGSAV (66 aa)).

This sequence belongs to the methylthiotransferase family. RimO subfamily. Requires [4Fe-4S] cluster as cofactor.

It localises to the cytoplasm. The catalysed reaction is L-aspartate(89)-[ribosomal protein uS12]-hydrogen + (sulfur carrier)-SH + AH2 + 2 S-adenosyl-L-methionine = 3-methylsulfanyl-L-aspartate(89)-[ribosomal protein uS12]-hydrogen + (sulfur carrier)-H + 5'-deoxyadenosine + L-methionine + A + S-adenosyl-L-homocysteine + 2 H(+). Functionally, catalyzes the methylthiolation of an aspartic acid residue of ribosomal protein uS12. The polypeptide is Ribosomal protein uS12 methylthiotransferase RimO (Mesorhizobium japonicum (strain LMG 29417 / CECT 9101 / MAFF 303099) (Mesorhizobium loti (strain MAFF 303099))).